Consider the following 202-residue polypeptide: FMN-dependent NADH:quinone oxidoreductase (202 aa).

FMN-binding positions include S9, 15–17, and 94–97; these read SAS and MYNL.

Belongs to the azoreductase type 1 family. As to quaternary structure, homodimer. The cofactor is FMN.

The enzyme catalyses 2 a quinone + NADH + H(+) = 2 a 1,4-benzosemiquinone + NAD(+). It carries out the reaction N,N-dimethyl-1,4-phenylenediamine + anthranilate + 2 NAD(+) = 2-(4-dimethylaminophenyl)diazenylbenzoate + 2 NADH + 2 H(+). Functionally, quinone reductase that provides resistance to thiol-specific stress caused by electrophilic quinones. Its function is as follows. Also exhibits azoreductase activity. Catalyzes the reductive cleavage of the azo bond in aromatic azo compounds to the corresponding amines. The sequence is that of FMN-dependent NADH:quinone oxidoreductase from Gluconobacter oxydans (strain 621H) (Gluconobacter suboxydans).